The chain runs to 244 residues: Proteasome subunit alpha (244 aa).

The protein belongs to the peptidase T1A family. In terms of assembly, the 20S proteasome core is composed of 14 alpha and 14 beta subunits that assemble into four stacked heptameric rings, resulting in a barrel-shaped structure. The two inner rings, each composed of seven catalytic beta subunits, are sandwiched by two outer rings, each composed of seven alpha subunits. The catalytic chamber with the active sites is on the inside of the barrel. Has a gated structure, the ends of the cylinder being occluded by the N-termini of the alpha-subunits. Is capped by the proteasome-associated ATPase, ARC.

It is found in the cytoplasm. It functions in the pathway protein degradation; proteasomal Pup-dependent pathway. The formation of the proteasomal ATPase ARC-20S proteasome complex, likely via the docking of the C-termini of ARC into the intersubunit pockets in the alpha-rings, may trigger opening of the gate for substrate entry. Interconversion between the open-gate and close-gate conformations leads to a dynamic regulation of the 20S proteasome proteolysis activity. Its function is as follows. Component of the proteasome core, a large protease complex with broad specificity involved in protein degradation. This Xylanimonas cellulosilytica (strain DSM 15894 / JCM 12276 / CECT 5975 / KCTC 9989 / LMG 20990 / NBRC 107835 / XIL07) protein is Proteasome subunit alpha.